Here is a 298-residue protein sequence, read N- to C-terminus: Inosose dehydratase (298 aa).

The protein belongs to the IolE/MocC family. It depends on glutathione as a cofactor. Co(2+) is required as a cofactor. Requires Mn(2+) as cofactor.

It carries out the reaction scyllo-inosose = 3D-3,5/4-trihydroxycyclohexane-1,2-dione + H2O. In terms of biological role, catalyzes the dehydration of inosose (2-keto-myo-inositol, 2KMI or 2,4,6/3,5-pentahydroxycyclohexanone) to 3D-(3,5/4)-trihydroxycyclohexane-1,2-dione (D-2,3-diketo-4-deoxy-epi-inositol). The sequence is that of Inosose dehydratase from Erwinia tasmaniensis (strain DSM 17950 / CFBP 7177 / CIP 109463 / NCPPB 4357 / Et1/99).